A 209-amino-acid chain; its full sequence is MVQERHPQRKGVCWTLRLWSTAVISMLLLSTCFIASCMVTYQFTMEKPNRRLSELHTYHSSLTCCSKGTMVSEKLWGCCPNHWKSFGSSCYLISTKENFWSISEQNYIHMGAHLVVINTETEQNYIIHQLNESLSYFLGLSDPQGNSKWQWIDNTPYPNNIKFWHPHEPNLPEEWCASIVYWNPSKWGWNDVFCDSKHNSICETKKIYL.

Residues 1–20 are Cytoplasmic-facing; the sequence is MVQERHPQRKGVCWTLRLWS. Residues 21-43 traverse the membrane as a helical; Signal-anchor for type II membrane protein segment; the sequence is TAVISMLLLSTCFIASCMVTYQF. Residues 44-209 lie on the Extracellular side of the membrane; that stretch reads TMEKPNRRLS…SICETKKIYL (166 aa). 2 disulfide bridges follow: C64–C78 and C79–C90. The region spanning 86 to 203 is the C-type lectin domain; the sequence is FGSSCYLIST…CDSKHNSICE (118 aa). Ca(2+)-binding residues include V116, N118, and E122. N131 is a glycosylation site (N-linked (GlcNAc...) asparagine). Positions 168, 170, and 174 each coordinate Ca(2+). Alpha-D-mannopyranose-binding positions include 168–170, E174, W182, and 190–191; these read EPN and ND. C176 and C194 are disulfide-bonded. Ca(2+)-binding residues include N190, D191, and E203.

In terms of assembly, associated with FCER1G. Heterodimer with CLEC4D; this heterodimer forms a pattern recognition receptor (PRR) against fungal infection.

It localises to the cell membrane. In terms of biological role, calcium-dependent lectin that acts as a pattern recognition receptor (PRR) of the innate immune system: specifically recognizes and binds alpha-mannans on C.albicans hypheas. Binding of C.albicans alpha-mannans to this receptor complex leads to phosphorylation of the immunoreceptor tyrosine-based activation motif (ITAM) of FCER1G, triggering activation of SYK, CARD9 and NF-kappa-B, consequently driving maturation of antigen-presenting cells and shaping antigen-specific priming of T-cells toward effector T-helper 1 and T-helper 17 cell subtypes. Also recognizes, in a mannose-dependent manner, allergens from house dust mite and fungi, by promoting cysteinyl leukotriene production. Recognizes soluble elements from the eggs of Shistosoma mansoni altering adaptive immune responses. The polypeptide is C-type lectin domain family 6 member A (CLEC6A) (Rattus norvegicus (Rat)).